The chain runs to 176 residues: RNA 2',3'-cyclic phosphodiesterase (176 aa).

His28 serves as the catalytic Proton donor. 2 short sequence motifs (HXTX) span residues 28 to 31 (HITL) and 113 to 116 (HVTL). His113 (proton acceptor) is an active-site residue.

Belongs to the 2H phosphoesterase superfamily. ThpR family.

It catalyses the reaction a 3'-end 2',3'-cyclophospho-ribonucleotide-RNA + H2O = a 3'-end 2'-phospho-ribonucleotide-RNA + H(+). Hydrolyzes RNA 2',3'-cyclic phosphodiester to an RNA 2'-phosphomonoester. The chain is RNA 2',3'-cyclic phosphodiesterase from Aeropyrum pernix (strain ATCC 700893 / DSM 11879 / JCM 9820 / NBRC 100138 / K1).